A 121-amino-acid polypeptide reads, in one-letter code: Holo-[acyl-carrier-protein] synthase (121 aa).

Residues Asp-8 and Glu-55 each contribute to the Mg(2+) site.

It belongs to the P-Pant transferase superfamily. AcpS family. Mg(2+) serves as cofactor.

The protein localises to the cytoplasm. The catalysed reaction is apo-[ACP] + CoA = holo-[ACP] + adenosine 3',5'-bisphosphate + H(+). Functionally, transfers the 4'-phosphopantetheine moiety from coenzyme A to a Ser of acyl-carrier-protein. The chain is Holo-[acyl-carrier-protein] synthase from Caldicellulosiruptor bescii (strain ATCC BAA-1888 / DSM 6725 / KCTC 15123 / Z-1320) (Anaerocellum thermophilum).